A 299-amino-acid polypeptide reads, in one-letter code: Taste receptor type 2 member 50 (299 aa).

A topological domain (extracellular) is located at residue Met-1. The chain crosses the membrane as a helical span at residues 2–22 (ITFLYIFFSILIMVLFVLGNF). At 23–55 (ANGFIALVNFIDWVKRKKISSADQILTALAVSR) the chain is on the cytoplasmic side. A helical transmembrane segment spans residues 56–76 (IGLLWALLLNWYLTVLNPAFY). Topologically, residues 77–87 (SVELRITSYNA) are extracellular. Residues 88 to 108 (WVVTNHFSMWLAANLSIFYLL) form a helical membrane-spanning segment. Residues 109-126 (KIANFSNLLFLHLKRRVR) are Cytoplasmic-facing. A helical transmembrane segment spans residues 127–147 (SVILVILLGTLIFLVCHLLVA). The Extracellular segment spans residues 148 to 181 (NMDESMWAEEYEGNMTGKMKLRNTVHLSYLTVTT). N-linked (GlcNAc...) asparagine glycosylation is present at Asn-161. A helical membrane pass occupies residues 182 to 202 (LWSFIPFTLSLISFLMLICSL). The Cytoplasmic segment spans residues 203–229 (CKHLKKMQLHGEGSQDLSTKVHIKALQ). Residues 230-250 (TLISFLLLCAIFFLFLIVSVW) form a helical membrane-spanning segment. Topologically, residues 251–259 (SPRRLRNDP) are extracellular. Residues 260 to 280 (VVMVSKAVGNIYLAFDSFILI) traverse the membrane as a helical segment. The Cytoplasmic segment spans residues 281 to 299 (WRTKKLKHTFLLILCQIRC).

It belongs to the G-protein coupled receptor T2R family. As to expression, expressed in subsets of taste receptor cells of the tongue and exclusively in gustducin-positive cells.

The protein localises to the membrane. In terms of biological role, receptor that may play a role in the perception of bitterness and is gustducin-linked. May play a role in sensing the chemical composition of the gastrointestinal content. The activity of this receptor may stimulate alpha gustducin, mediate PLC-beta-2 activation and lead to the gating of TRPM5. The chain is Taste receptor type 2 member 50 (TAS2R50) from Homo sapiens (Human).